The following is a 149-amino-acid chain: SsrA-binding protein (149 aa).

Residues 121 to 149 (GKGEHDKRDTIKDREGKREVERAMKSRSR) are disordered.

The protein belongs to the SmpB family.

It is found in the cytoplasm. Its function is as follows. Required for rescue of stalled ribosomes mediated by trans-translation. Binds to transfer-messenger RNA (tmRNA), required for stable association of tmRNA with ribosomes. tmRNA and SmpB together mimic tRNA shape, replacing the anticodon stem-loop with SmpB. tmRNA is encoded by the ssrA gene; the 2 termini fold to resemble tRNA(Ala) and it encodes a 'tag peptide', a short internal open reading frame. During trans-translation Ala-aminoacylated tmRNA acts like a tRNA, entering the A-site of stalled ribosomes, displacing the stalled mRNA. The ribosome then switches to translate the ORF on the tmRNA; the nascent peptide is terminated with the 'tag peptide' encoded by the tmRNA and targeted for degradation. The ribosome is freed to recommence translation, which seems to be the essential function of trans-translation. This is SsrA-binding protein from Polaromonas sp. (strain JS666 / ATCC BAA-500).